The following is a 406-amino-acid chain: MSQPITRENFDEWMIPVYAPAPFIPVRGEGSRLWDQQGKEYIDFAGGIAVNALGHAHPELREALNEQASKFWHTGNGYTNEPVLRLAKKLIDATFADRVFFCNSGAEANEAALKLARKFAHDRYGSHKSGIVAFKNAFHGRTLFTVSAGGQPAYSQDFAPLPPDIHHAAYNDINSASALIDDATCAVIVEPIQGEGGVVPASNAFLQGLRELCDRHNALLIFDEVQTGVGRTGELYAYMHYGVTPDLLTTAKALGGGFPVGALLATEECASVMTVGTHGTTYGGNPLASAVAGKVLDLINTPEMLNGVKQRHDWFVERLNSINHHYGLFSEVRGLGLLIGCVLNADYAGQAKQISQEAAKAGVMVLIAGGNVVRFAPALNVSEEEVTTGLDRFAAACEHFVSRGSS.

Lys252 is subject to N6-(pyridoxal phosphate)lysine.

It belongs to the class-III pyridoxal-phosphate-dependent aminotransferase family. AstC subfamily. Requires pyridoxal 5'-phosphate as cofactor.

It catalyses the reaction N(2)-succinyl-L-ornithine + 2-oxoglutarate = N-succinyl-L-glutamate 5-semialdehyde + L-glutamate. It participates in amino-acid degradation; L-arginine degradation via AST pathway; L-glutamate and succinate from L-arginine: step 3/5. Functionally, catalyzes the transamination of N(2)-succinylornithine and alpha-ketoglutarate into N(2)-succinylglutamate semialdehyde and glutamate. Can also act as an acetylornithine aminotransferase. This chain is Succinylornithine transaminase, found in Escherichia coli (strain SMS-3-5 / SECEC).